Here is a 133-residue protein sequence, read N- to C-terminus: Fluoride-specific ion channel FluC (133 aa).

4 consecutive transmembrane segments (helical) span residues 5–25 (VPATSLILWLAVALGGALGAL), 43–63 (VATLTVNVLGSFLMGVFYVVI), 76–96 (VIMIGFLGAFTTFSTFSIESL), and 108–128 (ISYVVANVVLSISAVVVAIVL). Residues Gly83 and Thr86 each contribute to the Na(+) site.

The protein belongs to the fluoride channel Fluc/FEX (TC 1.A.43) family.

The protein localises to the cell inner membrane. The catalysed reaction is fluoride(in) = fluoride(out). With respect to regulation, na(+) is not transported, but it plays an essential structural role and its presence is essential for fluoride channel function. Its function is as follows. Fluoride-specific ion channel. Important for reducing fluoride concentration in the cell, thus reducing its toxicity. The protein is Fluoride-specific ion channel FluC of Saccharophagus degradans (strain 2-40 / ATCC 43961 / DSM 17024).